The sequence spans 482 residues: Histone deacetylase 1 (482 aa).

Positions 9-321 (RKVCYYYDGD…WTYETAVALD (313 aa)) are histone deacetylase. 1D-myo-inositol 1,4,5,6-tetrakisphosphate-binding residues include G27 and K31. Residue K74 is modified to N6-acetyllysine; alternate. K74 participates in a covalent cross-link: Glycyl lysine isopeptide (Lys-Gly) (interchain with G-Cter in SUMO2); alternate. H141 is a catalytic residue. Positions 176 and 178 each coordinate Zn(2+). Position 220 is an N6-acetyllysine (K220). Residue C261 is modified to S-nitrosocysteine. D264 serves as a coordination point for Zn(2+). Position 270 (R270) interacts with 1D-myo-inositol 1,4,5,6-tetrakisphosphate. C273 bears the S-nitrosocysteine mark. Residues 390-400 (PEESGDEDEED) are compositionally biased toward acidic residues. Residues 390 to 482 (PEESGDEDEE…KGVKEEVKLA (93 aa)) are disordered. Residues S393, S406, S409, S421, and S423 each carry the phosphoserine modification. Residues 401–416 (PDKRISICSSDKRIAC) are compositionally biased toward basic and acidic residues. A compositionally biased stretch (acidic residues) spans 417–427 (EEEFSDSDEEG). Residue K432 is modified to N6-methylated lysine; by EHMT2. K438 is covalently cross-linked (Glycyl lysine isopeptide (Lys-Gly) (interchain with G-Cter in SUMO2)). The span at 443 to 482 (VKTEDEKEKDPEEKKEVTEEEKTKEEKQEAKGVKEEVKLA) shows a compositional bias: basic and acidic residues. K444 participates in a covalent cross-link: Glycyl lysine isopeptide (Lys-Gly) (interchain with G-Cter in SUMO2); alternate. Residue K444 forms a Glycyl lysine isopeptide (Lys-Gly) (interchain with G-Cter in SUMO); alternate linkage. Glycyl lysine isopeptide (Lys-Gly) (interchain with G-Cter in SUMO2) cross-links involve residues K456, K457, and K473. Residue K476 forms a Glycyl lysine isopeptide (Lys-Gly) (interchain with G-Cter in SUMO2); alternate linkage. A Glycyl lysine isopeptide (Lys-Gly) (interchain with G-Cter in SUMO); alternate cross-link involves residue K476. A Glycyl lysine isopeptide (Lys-Gly) (interchain with G-Cter in SUMO2) cross-link involves residue K480.

This sequence belongs to the histone deacetylase family. HD type 1 subfamily. As to quaternary structure, part of the core histone deacetylase (HDAC) complex composed of HDAC1, HDAC2, RBBP4 and RBBP7, the core complex associates with SIN3, SAP18 and SAP30 to form the SIN3 HDAC complex. Component of the nucleosome remodeling and deacetylase (NuRD) repressor complex, composed of core proteins MTA1, MTA2, MTA3, RBBP4, RBBP7, HDAC1, HDAC2, MBD2, MBD3, and peripherally associated proteins CDK2AP1, CDK2AP2, GATAD2A, GATAD2B, CHD3, CHD4 and CHD5. The exact stoichiometry of the NuRD complex is unknown, and some subunits such as MBD2 and MBD3, GATAD2A and GATAD2B, and CHD3, CHD4 and CHD5 define mutually exclusive NuRD complexes. Component of a BHC histone deacetylase complex that contains HDAC1, HDAC2, HMG20B/BRAF35, KDM1A, RCOR1/CoREST and PHF21A/BHC80. The BHC complex may also contain ZMYM2, ZNF217, ZMYM3, GSE1 and GTF2I. Component of a mSin3A corepressor complex that contains SIN3A, SAP130, SUDS3/SAP45, ARID4B/SAP180, HDAC1 and HDAC2. Found in a trimeric complex with APBB1 and TSHZ3; the interaction between HDAC1 and APBB1 is mediated by TSHZ3. Forms a complex comprising APPL1, RUVBL2, APPL2, CTNNB1 and HDAC2. Component of a RCOR/GFI/KDM1A/HDAC complex. Part of a complex composed of TRIM28, HDAC1, HDAC2 and EHMT2. Part of a complex containing at least CDYL, MIER1, MIER2, HDAC1 and HDAC2. The large PER complex involved in the histone deacetylation is composed of at least HDAC1, PER2, SFPQ and SIN3A. Associates with the 9-1-1 complex; interacts with HUS1. Found in a complex with DNMT3A and HDAC7. Found in a complex with YY1, SIN3A and GON4L. Identified in a histone deacetylase complex that contains DNTTIP1, HDAC1 and MIDEAS; this complex assembles into a tetramer that contains four copies of each protein chain. Found in a complex composed of at least SINHCAF, SIN3A, HDAC1, SAP30, RBBP4, OGT and TET1. Component of the SIN3B complex, which includes SIN3B, HDAC1, PHF12 and MORF4L1. Interacts with GFI1; the interaction is direct. Interacts directly with GFI1B. Interacts with TSHZ3 (via N-terminus); the interaction is direct. Interacts with APEX1; the interaction is not dependent on the acetylated status of APEX1. Interacts with BANP. Interacts with BAZ2A/TIP5. Interacts with BCL6. Interacts with BCOR. Interacts with BHLHE40/DEC1. Interacts with BRCC3; this interaction is enhanced in the presence of PWWP2B. Interacts with BRMS1. Interacts with BRMS1L. Interacts with C10orf90/FATS (via its N-terminal); the interaction prevents binding of HDAC1 to CDKN1A/p21 and facilitates the acetylation and stabilization of CDKN1A/p21. Interacts with CBFA2T3. Interacts with CCAR2. Interacts with CDK2AP1. Interacts with CHD3. Interacts with CHD4. Interacts with CHFR. Interacts with CIART. Interacts with CDKN1A/p21. Interacts with CDK5 complexed to CDK5R1 (p25). Interacts with CRY1. Interacts with DAXX. Interacts with DDIT3/CHOP. Interacts with DDX5. Interacts with DHX36; this interaction occurs in a RNA-dependent manner. Interacts with DNMT1. Interacts with DNTTIP1. Interacts with E4F1. Interacts with EP300. Interacts with ERCC6. Interacts with GATAD2A. Interacts with HCFC1. Interacts with HDAC9. Interacts with HUS1. Interacts with INSM1. Interacts with KDM4A. Interacts with KDM5A; this interaction impairs histone deacetylation. Interacts with KDM5B. Interacts with KLF1. Interacts with MBD3L2. Interacts with MIER1. Interacts with NFE4. Interacts with NR4A2/NURR1. Interacts with NR1D2 (via C-terminus). Interacts with NRIP1. Interacts with NSD2. Interacts with PACS2. Interacts with PHB2. Interacts with PPHLN1. Interacts with PRDM6. Interacts with PRDM16. Interacts with PWWP2A in a MTA1-dependent manner. Interacts with PWWP2B. Interacts with RB1. Interacts with RERE. Interacts with SANBR (via the BTB domain). Interacts with SAMSN1. Interacts with SAP30L. Interacts with SETDB1. Interacts with SIN3A. Interacts with SMAD3. Interacts with SMAD4; positively regulated by ZBTB7A. Interacts with SMARCAD1. Interacts with SMARCA4/BRG1. Interacts with SMYD2. Interacts with SMYD4 (via MYND-type zinc finger). Interacts with SP1; the interaction deacetylates SP1 and regulates its transcriptional activity. Interacts with SP3; the interaction deacetylates SP3 and regulates its transcriptional activity. In vitro, C(18) ceramides increase this interaction and the subsequent SP3 deacetylation and SP3-mediated repression of the TERT promoter. Interacts with SPEN/MINT. Interacts with SPHK2. Interacts with SUV39H1. Interacts with TGIF. Interacts with TGIF2. Interacts with TRAF6. Interacts with TRIM28; the interaction recruits HDAC1 to E2F1 and inhibits its acetylation. Interacts with TSC22D3 isoform 1; this interaction affects HDAC1 activity on MYOG promoter and thus inhibits MYOD1 transcriptional activity. Interacts with UHRF1. Interacts with UHRF2. Interacts with ZBTB7A. Interacts with ZMYND8. Interacts with ZMYND15. Interacts with ZNF431. Interacts with ZNF516; this interaction is enhanced in the presence of PWWP2B. Interacts with ZNF541. Interacts with ZNF638. Interacts with ZNHIT1. Interacts with the non-histone region of MACROH2A1. Identified in a complex with HDAC2, KCTD19, DNTTIP1 and ZNF541. Interacts with MSX3. Interacts with VRK1. Requires Zn(2+) as cofactor. Sumoylated on Lys-444 and Lys-476; which promotes enzymatic activity. Desumoylated by SENP1. Post-translationally, phosphorylation on Ser-421 and Ser-423 promotes enzymatic activity and interactions with NuRD and SIN3 complexes. Phosphorylated by CDK5. In terms of processing, ubiquitinated by CHFR and KCTD11, leading to its degradation by the proteasome.

The protein localises to the nucleus. The catalysed reaction is N(6)-acetyl-L-lysyl-[histone] + H2O = L-lysyl-[histone] + acetate. It catalyses the reaction N(6)-acetyl-L-lysyl-[protein] + H2O = L-lysyl-[protein] + acetate. The enzyme catalyses N(6)-(2E)-butenoyl-L-lysyl-[protein] + H2O = (2E)-2-butenoate + L-lysyl-[protein]. It carries out the reaction N(6)-[(S)-lactoyl]-L-lysyl-[protein] + H2O = (S)-lactate + L-lysyl-[protein]. Inositol tetraphosphate (1D-myo-inositol 1,4,5,6-tetrakisphosphate) may act as an intermolecular glue between HDAC1 and N-Cor repressor complex components. In terms of biological role, histone deacetylase that catalyzes the deacetylation of lysine residues on the N-terminal part of the core histones (H2A, H2B, H3 and H4). Histone deacetylation gives a tag for epigenetic repression and plays an important role in transcriptional regulation, cell cycle progression and developmental events. Histone deacetylases act via the formation of large multiprotein complexes. Acts as a component of the histone deacetylase NuRD complex which participates in the remodeling of chromatin. As part of the SIN3B complex is recruited downstream of the constitutively active genes transcriptional start sites through interaction with histones and mitigates histone acetylation and RNA polymerase II progression within transcribed regions contributing to the regulation of transcription. Also functions as a deacetylase for non-histone targets, such as NR1D2, RELA, SP1, SP3, STAT3 and TSHZ3. Deacetylates SP proteins, SP1 and SP3, and regulates their function. Component of the BRG1-RB1-HDAC1 complex, which negatively regulates the CREST-mediated transcription in resting neurons. Upon calcium stimulation, HDAC1 is released from the complex and CREBBP is recruited, which facilitates transcriptional activation. Deacetylates TSHZ3 and regulates its transcriptional repressor activity. Deacetylates 'Lys-310' in RELA and thereby inhibits the transcriptional activity of NF-kappa-B. Deacetylates NR1D2 and abrogates the effect of KAT5-mediated relieving of NR1D2 transcription repression activity. Component of a RCOR/GFI/KDM1A/HDAC complex that suppresses, via histone deacetylase (HDAC) recruitment, a number of genes implicated in multilineage blood cell development. Involved in CIART-mediated transcriptional repression of the circadian transcriptional activator: CLOCK-BMAL1 heterodimer. Required for the transcriptional repression of circadian target genes, such as PER1, mediated by the large PER complex or CRY1 through histone deacetylation. In addition to protein deacetylase activity, also has protein-lysine deacylase activity: acts as a protein decrotonylase and delactylase by mediating decrotonylation ((2E)-butenoyl) and delactylation (lactoyl) of histones, respectively. This Bos taurus (Bovine) protein is Histone deacetylase 1 (HDAC1).